Here is a 160-residue protein sequence, read N- to C-terminus: Phosphopantetheine adenylyltransferase (160 aa).

Substrate is bound at residue serine 9. Residues 9-10 (SF) and histidine 17 contribute to the ATP site. 3 residues coordinate substrate: lysine 41, valine 73, and lysine 87. Residues 88–90 (GLR), glutamate 98, and 122–128 (YSFVSSS) each bind ATP.

It belongs to the bacterial CoaD family. In terms of assembly, homohexamer. It depends on Mg(2+) as a cofactor.

It localises to the cytoplasm. It catalyses the reaction (R)-4'-phosphopantetheine + ATP + H(+) = 3'-dephospho-CoA + diphosphate. Its pathway is cofactor biosynthesis; coenzyme A biosynthesis; CoA from (R)-pantothenate: step 4/5. Reversibly transfers an adenylyl group from ATP to 4'-phosphopantetheine, yielding dephospho-CoA (dPCoA) and pyrophosphate. This chain is Phosphopantetheine adenylyltransferase, found in Mycobacterium avium (strain 104).